A 491-amino-acid chain; its full sequence is Galactose-1-phosphate uridylyltransferase 1 (491 aa).

This sequence belongs to the galactose-1-phosphate uridylyltransferase type 2 family.

It localises to the cytoplasm. The catalysed reaction is alpha-D-galactose 1-phosphate + UDP-alpha-D-glucose = alpha-D-glucose 1-phosphate + UDP-alpha-D-galactose. The protein operates within carbohydrate metabolism; galactose metabolism. The protein is Galactose-1-phosphate uridylyltransferase 1 (galT1) of Streptococcus pneumoniae serotype 4 (strain ATCC BAA-334 / TIGR4).